Reading from the N-terminus, the 261-residue chain is Thioesterase frbD (261 aa).

This sequence belongs to the AMT4 thioesterase family.

The protein operates within antifungal biosynthesis. In terms of biological role, thioesterase; part of the gene cluster that mediates the biosynthesis of the antifungal antibiotic FR901469, an inhibitor of beta-1,3-glucansynthase, exerting antifungal activity against the pathogenes Candida albicans and Aspergillus fumigatus. FR901469 is a cyclic depsipeptide containing 12 amino acid residues and a fatty acid chain. The NRPS frbI contains 12 modules responsible for the formation of the depsipeptide backbone which is denoted as Acyl-Thr-Ala-Tyr-Val-4OHPro-Thr-Thr-3OHPro-threo3OHGln-Gly-Thr-Orn-OH (C71H116N14O23). The PKS frbB is probably involved in the production of the hydrocarbon chain, and the acyl-CoA ligase frbC might be involved in the transport of the chain to the peptide ptoduct of frbI. Because FR901469 contains 3 hydroxylated amino acid residues, the 3 oxygenases frbA, frbH, and frbJ might be participating in amino acid hydroxylation. As no thioesterase domains were detected in frbI or frbB, the thioesterases frbD and frbE may instead release and cyclize the products of the NRPS and PKS, respectively. The protein is Thioesterase frbD of Dothideomycetidae sp. (strain 11243) (Fungal sp. (strain No.11243)).